A 328-amino-acid chain; its full sequence is Carbonic anhydrase-related protein 11 (328 aa).

An N-terminal signal peptide occupies residues 1-23 (MGGAARLSAPQALVLWAALGAAA). One can recognise an Alpha-carbonic anhydrase domain in the interval 33–303 (DWWSYKENLQ…LAHRALRGNR (271 aa)). Residue Asn-118 is glycosylated (N-linked (GlcNAc...) asparagine). The tract at residues 300–328 (RGNRDPRHPERRCRGPNYRLHVDGGPHGR) is disordered. A compositionally biased stretch (basic and acidic residues) spans 319 to 328 (LHVDGGPHGR).

It belongs to the alpha-carbonic anhydrase family.

It localises to the secreted. In terms of biological role, does not have a catalytic activity. In Mus musculus (Mouse), this protein is Carbonic anhydrase-related protein 11 (Ca11).